The chain runs to 269 residues: Iron(3+)-hydroxamate import ATP-binding protein FhuC (269 aa).

The region spanning 4 to 240 is the ABC transporter domain; that stretch reads LSTEQLGIGY…DILKQVFQID (237 aa). ATP-binding positions include 36–43 and 160–171; these read GPNGCGKS and LLLLDEPTTYLD.

The protein belongs to the ABC transporter superfamily. Iron (Fe3+)-hydroxamate importer (TC 3.A.1.14.7) family. As to quaternary structure, the complex is composed of an ATP-binding protein (FhuC), two transmembrane proteins (FhuB and FhuG) and a solute-binding protein (FhuD or YxeB).

The protein localises to the cell membrane. The enzyme catalyses ATP + H2O + Fe(3+)-hydroxamate complex-[hydroxamate-binding protein]Side 1 = ADP + phosphate + Fe(3+)-hydroxamate complexSide 2 + [hydroxamate-binding protein]Side 1.. Its function is as follows. Part of the ABC transporter complex FhuBGCD involved in iron(3+)-hydroxamate import. Responsible for energy coupling to the transport system. This chain is Iron(3+)-hydroxamate import ATP-binding protein FhuC (fhuC), found in Bacillus subtilis (strain 168).